The primary structure comprises 405 residues: Acetylornithine aminotransferase 2 (405 aa).

Residues 105–106 (GT) and phenylalanine 138 contribute to the pyridoxal 5'-phosphate site. N(2)-acetyl-L-ornithine is bound at residue arginine 141. Residue 224-227 (DEVQ) coordinates pyridoxal 5'-phosphate. Residue lysine 254 is modified to N6-(pyridoxal phosphate)lysine. Serine 282 contributes to the N(2)-acetyl-L-ornithine binding site. Threonine 283 is a pyridoxal 5'-phosphate binding site.

The protein belongs to the class-III pyridoxal-phosphate-dependent aminotransferase family. ArgD subfamily. As to quaternary structure, homodimer. Pyridoxal 5'-phosphate is required as a cofactor.

It is found in the cytoplasm. The catalysed reaction is N(2)-acetyl-L-ornithine + 2-oxoglutarate = N-acetyl-L-glutamate 5-semialdehyde + L-glutamate. Its pathway is amino-acid biosynthesis; L-arginine biosynthesis; N(2)-acetyl-L-ornithine from L-glutamate: step 4/4. The protein is Acetylornithine aminotransferase 2 of Caulobacter vibrioides (strain ATCC 19089 / CIP 103742 / CB 15) (Caulobacter crescentus).